Here is a 729-residue protein sequence, read N- to C-terminus: 1,4-alpha-glucan branching enzyme GlgB (729 aa).

The Nucleophile role is filled by D407. E460 acts as the Proton donor in catalysis.

This sequence belongs to the glycosyl hydrolase 13 family. GlgB subfamily. In terms of assembly, monomer.

It catalyses the reaction Transfers a segment of a (1-&gt;4)-alpha-D-glucan chain to a primary hydroxy group in a similar glucan chain.. Its pathway is glycan biosynthesis; glycogen biosynthesis. Functionally, catalyzes the formation of the alpha-1,6-glucosidic linkages in glycogen by scission of a 1,4-alpha-linked oligosaccharide from growing alpha-1,4-glucan chains and the subsequent attachment of the oligosaccharide to the alpha-1,6 position. The protein is 1,4-alpha-glucan branching enzyme GlgB of Pseudoalteromonas atlantica (strain T6c / ATCC BAA-1087).